A 270-amino-acid chain; its full sequence is Putative pyruvate, phosphate dikinase regulatory protein (270 aa).

149 to 156 (GVSRTSKT) contributes to the ADP binding site.

This sequence belongs to the pyruvate, phosphate/water dikinase regulatory protein family. PDRP subfamily.

The enzyme catalyses N(tele)-phospho-L-histidyl/L-threonyl-[pyruvate, phosphate dikinase] + ADP = N(tele)-phospho-L-histidyl/O-phospho-L-threonyl-[pyruvate, phosphate dikinase] + AMP + H(+). It catalyses the reaction N(tele)-phospho-L-histidyl/O-phospho-L-threonyl-[pyruvate, phosphate dikinase] + phosphate + H(+) = N(tele)-phospho-L-histidyl/L-threonyl-[pyruvate, phosphate dikinase] + diphosphate. In terms of biological role, bifunctional serine/threonine kinase and phosphorylase involved in the regulation of the pyruvate, phosphate dikinase (PPDK) by catalyzing its phosphorylation/dephosphorylation. In Thermoanaerobacter pseudethanolicus (strain ATCC 33223 / 39E) (Clostridium thermohydrosulfuricum), this protein is Putative pyruvate, phosphate dikinase regulatory protein.